The chain runs to 38 residues: Photosystem II reaction center protein L (38 aa).

Residues 17-37 (SLYWGLLLMFVLAVLFSSYFF) traverse the membrane as a helical segment.

The protein belongs to the PsbL family. PSII is composed of 1 copy each of membrane proteins PsbA, PsbB, PsbC, PsbD, PsbE, PsbF, PsbH, PsbI, PsbJ, PsbK, PsbL, PsbM, PsbT, PsbX, PsbY, PsbZ, Psb30/Ycf12, at least 3 peripheral proteins of the oxygen-evolving complex and a large number of cofactors. It forms dimeric complexes.

The protein localises to the plastid. It localises to the chloroplast thylakoid membrane. Functionally, one of the components of the core complex of photosystem II (PSII). PSII is a light-driven water:plastoquinone oxidoreductase that uses light energy to abstract electrons from H(2)O, generating O(2) and a proton gradient subsequently used for ATP formation. It consists of a core antenna complex that captures photons, and an electron transfer chain that converts photonic excitation into a charge separation. This subunit is found at the monomer-monomer interface and is required for correct PSII assembly and/or dimerization. This Emiliania huxleyi (Coccolithophore) protein is Photosystem II reaction center protein L.